We begin with the raw amino-acid sequence, 331 residues long: Malate dehydrogenase (331 aa).

Residue 14–20 coordinates NAD(+); the sequence is GAAGSIG. Arg95 and Arg101 together coordinate substrate. Residues Asn108, Gln115, and 132–134 each bind NAD(+); that span reads VGN. 2 residues coordinate substrate: Asn134 and Arg165. The active-site Proton acceptor is the His190.

This sequence belongs to the LDH/MDH superfamily. MDH type 2 family.

The enzyme catalyses (S)-malate + NAD(+) = oxaloacetate + NADH + H(+). Functionally, catalyzes the reversible oxidation of malate to oxaloacetate. The protein is Malate dehydrogenase of Rhodococcus jostii (strain RHA1).